The chain runs to 262 residues: tRNA pseudouridine synthase A (262 aa).

D52 functions as the Nucleophile in the catalytic mechanism. Y103 contributes to the substrate binding site.

Belongs to the tRNA pseudouridine synthase TruA family.

It carries out the reaction uridine(38/39/40) in tRNA = pseudouridine(38/39/40) in tRNA. In terms of biological role, formation of pseudouridine at positions 38, 39 and 40 in the anticodon stem and loop of transfer RNAs. The sequence is that of tRNA pseudouridine synthase A from Methanococcus maripaludis (strain C6 / ATCC BAA-1332).